The sequence spans 1669 residues: Dystrophin, isoform B (1669 aa).

Pro residues predominate over residues 1-11 (MTAKPPPPIPP). 5 disordered regions span residues 1–28 (MTAKPPPPIPPTLGGDDSGTHGPKLAPE), 43–243 (RGQQ…SEDA), 327–356 (RAQAQQQSLLNNSSSSSSNSQVEQSMRSTI), 389–417 (GGGGGNSSTGNAVANSGTSGSQQPPMPLS), and 481–508 (SGALSREELRMRRRSSHDETQLTQNSSG). Polar residues predominate over residues 53 to 62 (SQEQHATNTL). The segment covering 118 to 131 (GLPPTMRQPPPLPR) has biased composition (pro residues). Residues 132 to 147 (KPASTQSSAQNSAQSS) are compositionally biased toward low complexity. Over residues 153–166 (KFKDKPPPPPEKHS) the composition is skewed to basic and acidic residues. Low complexity-rich tracts occupy residues 328–347 (AQAQQQSLLNNSSSSSSNSQ) and 396–405 (STGNAVANSG). The segment covering 485–500 (SREELRMRRRSSHDET) has biased composition (basic and acidic residues). Spectrin repeat units lie at residues 541–643 (QRFE…KQLH), 650–747 (QSFD…NRLE), 754–883 (NALL…HRLD), and 890–990 (RQFQ…KVLC). The disordered stretch occupies residues 827–851 (VSDTSDTEANHDSDSRYMSAEEQSR). Residues 994–1024 (AQQTHENGDDGRTTSNSGTIGPLPNLGQSVK) form a disordered region. The WW domain occupies 1021 to 1054 (QSVKPPWERATTAANVPYYIDHERETTHWDHPEM). The ZZ-type zinc finger occupies 1279–1335 (KHQAKCNICKEYPIVGFRYRCLKCFNFDMCQKCFFFGRNAKNHKLTHPMHEYCTTTT). Zn(2+)-binding residues include C1284, C1287, C1299, C1302, C1308, C1311, H1321, and H1325. S1379 carries the post-translational modification Phosphoserine. 2 disordered regions span residues 1488 to 1516 (EQSGMPEDSNGMQHSSSSMTGLSGQGEQG) and 1559 to 1669 (DEPN…ELQK). Composition is skewed to polar residues over residues 1497–1509 (NGMQHSSSSMTGL) and 1580–1611 (ALNSKPNTLQTRSVTASQLNTDSPAKMNQQNG). Residues 1630–1641 (QELESINDDLED) show a composition bias toward acidic residues. Residues 1642–1660 (SSSSNTTNTTTTTTTTATT) are compositionally biased toward low complexity.

As to quaternary structure, component of the dystrophin associated protein complex (DAPC). Interacts with Dg, via the Dg WW domain binding sites. As to expression, expressed in neuronally derived tissues, mainly the CNS and the brain of stage 16 embryos. Lower level expression is seen in the sensory organs. Expression is absent from the musculature. In larvae, expression is predominant throughout the neuropil and brain and in the eye antennal disks.

Its subcellular location is the cell membrane. It localises to the sarcolemma. The protein localises to the cytoplasm. It is found in the cytoskeleton. Its function is as follows. Required for the maintenance of appropriate synaptic retrograde communication and the stabilization of muscle cell architecture or physiology. May play a role in anchoring the cytoskeleton to the plasma membrane. In Drosophila melanogaster (Fruit fly), this protein is Dystrophin, isoform B (Dys).